A 314-amino-acid polypeptide reads, in one-letter code: Olfactory receptor 52H1 (314 aa).

At 1–32 the chain is on the extracellular side; the sequence is MIIFNLSSYNPGPFILVGIPGLEQFHVWIGIP. N-linked (GlcNAc...) asparagine glycosylation is present at asparagine 5. Residues 33-53 form a helical membrane-spanning segment; sequence FCIIYIVAVVGNCILLYLIVV. Residues 54-59 are Cytoplasmic-facing; that stretch reads EHSLHE. A helical membrane pass occupies residues 60–80; that stretch reads PMFFFLSMLAMTDLILSTAGV. At 81–101 the chain is on the extracellular side; that stretch reads PKALSIFWLGAREITFPGCLT. Cysteines 99 and 181 form a disulfide. Residues 102 to 122 form a helical membrane-spanning segment; the sequence is QMFFLHYNFVLDSAILMAMAF. At 123 to 149 the chain is on the cytoplasmic side; the sequence is DHYVAICSPLRYTTILTPKTIIKSAMG. A helical membrane pass occupies residues 150-170; the sequence is ISFRSFCIILPDVFLLTCLPF. Residues 171–197 are Extracellular-facing; the sequence is CRTRIIPHTYCEHIGVAQLACADISIN. A helical membrane pass occupies residues 198–218; that stretch reads FWYGFCVPIMTVISDVILIAV. Residues 219–242 lie on the Cytoplasmic side of the membrane; the sequence is SYAHILCAVFGLPSQDACQKALGT. A helical transmembrane segment spans residues 243–263; sequence CGSHVCVILMFYTPAFFSILA. Residues 264–275 are Extracellular-facing; that stretch reads HRFGHNVSRTFH. Asparagine 269 is a glycosylation site (N-linked (GlcNAc...) asparagine). A helical membrane pass occupies residues 276-296; that stretch reads IMFANLYIVIPPALNPMVYGV. Residues 297–314 lie on the Cytoplasmic side of the membrane; that stretch reads KTKQIRDKVILLFSKGTG.

The protein belongs to the G-protein coupled receptor 1 family.

Its subcellular location is the membrane. In terms of biological role, odorant receptor. This chain is Olfactory receptor 52H1 (OR52H1), found in Homo sapiens (Human).